A 557-amino-acid chain; its full sequence is Dihydroxy-acid dehydratase (557 aa).

Cysteine 50 serves as a coordination point for [2Fe-2S] cluster. Aspartate 82 contributes to the Mg(2+) binding site. Position 123 (cysteine 123) interacts with [2Fe-2S] cluster. Mg(2+) is bound by residues aspartate 124 and lysine 125. The residue at position 125 (lysine 125) is an N6-carboxylysine. Cysteine 195 serves as a coordination point for [2Fe-2S] cluster. Glutamate 447 serves as a coordination point for Mg(2+). Serine 473 (proton acceptor) is an active-site residue.

This sequence belongs to the IlvD/Edd family. As to quaternary structure, homodimer. The cofactor is [2Fe-2S] cluster. Mg(2+) is required as a cofactor.

It carries out the reaction (2R)-2,3-dihydroxy-3-methylbutanoate = 3-methyl-2-oxobutanoate + H2O. The enzyme catalyses (2R,3R)-2,3-dihydroxy-3-methylpentanoate = (S)-3-methyl-2-oxopentanoate + H2O. It functions in the pathway amino-acid biosynthesis; L-isoleucine biosynthesis; L-isoleucine from 2-oxobutanoate: step 3/4. The protein operates within amino-acid biosynthesis; L-valine biosynthesis; L-valine from pyruvate: step 3/4. Functionally, functions in the biosynthesis of branched-chain amino acids. Catalyzes the dehydration of (2R,3R)-2,3-dihydroxy-3-methylpentanoate (2,3-dihydroxy-3-methylvalerate) into 2-oxo-3-methylpentanoate (2-oxo-3-methylvalerate) and of (2R)-2,3-dihydroxy-3-methylbutanoate (2,3-dihydroxyisovalerate) into 2-oxo-3-methylbutanoate (2-oxoisovalerate), the penultimate precursor to L-isoleucine and L-valine, respectively. This chain is Dihydroxy-acid dehydratase, found in Burkholderia mallei (strain NCTC 10247).